A 311-amino-acid chain; its full sequence is Methionyl-tRNA formyltransferase (311 aa).

110–113 serves as a coordination point for (6S)-5,6,7,8-tetrahydrofolate; the sequence is SLLP.

Belongs to the Fmt family.

It catalyses the reaction L-methionyl-tRNA(fMet) + (6R)-10-formyltetrahydrofolate = N-formyl-L-methionyl-tRNA(fMet) + (6S)-5,6,7,8-tetrahydrofolate + H(+). In terms of biological role, attaches a formyl group to the free amino group of methionyl-tRNA(fMet). The formyl group appears to play a dual role in the initiator identity of N-formylmethionyl-tRNA by promoting its recognition by IF2 and preventing the misappropriation of this tRNA by the elongation apparatus. The polypeptide is Methionyl-tRNA formyltransferase (Streptococcus pyogenes serotype M18 (strain MGAS8232)).